Reading from the N-terminus, the 1015-residue chain is SKI family transcriptional corepressor 2 (1015 aa).

Disordered stretches follow at residues 280–316 and 518–934; these read HLLG…DDDD and GAAG…KKDV. Over residues 284–295 the composition is skewed to pro residues; it reads APPPPPPPPPPL. The span at 575-600 shows a compositional bias: low complexity; it reads PPADSVAAAGAGAAAAGSGPAGSRVP. The span at 628–637 shows a compositional bias: basic and acidic residues; it reads GGKDDAESLA. Over residues 653 to 669 the composition is skewed to basic residues; that stretch reads HPHHHHHPHHHHHHHHP. Composition is skewed to pro residues over residues 670-684 and 694-708; these read PQPP…PQPD and APPP…PPLA. Acidic residues-rich tracts occupy residues 730-745 and 754-774; these read DSSE…QEVD and GEEE…EETE. The segment covering 793 to 803 has biased composition (basic and acidic residues); sequence PSEKGSSRDRA. Residues 832-842 are compositionally biased toward pro residues; that stretch reads DLPPPPPPPLA. Basic and acidic residues-rich tracts occupy residues 861–877, 885–899, and 912–922; these read PSLE…KTKE, TKDD…KEHS, and FWRERSGEHTQ.

Belongs to the SKI family. As to quaternary structure, interacts with SMAD2 and SMAD3. In terms of tissue distribution, expressed in cerebellum, spinal cord and testis. Isoform 2 is present in cerebellum (at protein level).

Its subcellular location is the nucleus. It is found in the cytoplasm. Its function is as follows. Exhibits transcriptional repressor activity. Acts as a TGF-beta antagonist in the nervous system. The chain is SKI family transcriptional corepressor 2 from Homo sapiens (Human).